The sequence spans 412 residues: DnaJ homolog subfamily A member 2 (412 aa).

A J domain is found at lysine 8 to glycine 70. Residue lysine 39 is modified to N6-acetyllysine. A phosphoserine mark is found at serine 78 and serine 123. The CR-type zinc finger occupies glycine 130–valine 214. Residue lysine 134 forms a Glycyl lysine isopeptide (Lys-Gly) (interchain with G-Cter in SUMO2) linkage. Zn(2+)-binding residues include cysteine 143 and cysteine 146. Residues cysteine 143–glycine 150 form a CXXCXGXG motif repeat. Lysine 152 is subject to N6-acetyllysine. Residues cysteine 159, cysteine 162, cysteine 186, cysteine 189, cysteine 202, and cysteine 205 each coordinate Zn(2+). 3 CXXCXGXG motif repeats span residues cysteine 159–glycine 166, cysteine 186–glycine 193, and cysteine 202–lysine 209. Residues isoleucine 365–glutamine 412 form a disordered region. Tyrosine 391 carries the phosphotyrosine modification. Phosphoserine is present on residues serine 394 and serine 395. Cysteine methyl ester is present on cysteine 409. Cysteine 409 carries the S-farnesyl cysteine lipid modification. A propeptide spans alanine 410–glutamine 412 (removed in mature form).

Its subcellular location is the membrane. Co-chaperone of Hsc70. Stimulates ATP hydrolysis and the folding of unfolded proteins mediated by HSPA1A/B (in vitro). This chain is DnaJ homolog subfamily A member 2 (DNAJA2), found in Homo sapiens (Human).